Consider the following 425-residue polypeptide: Kynurenine/alpha-aminoadipate aminotransferase, mitochondrial (425 aa).

Residues 1-29 (MNYSRFLTATSLARKPSPIRTTADILSKA) constitute a mitochondrion transit peptide. Residue R20 participates in substrate binding. S40 carries the post-translational modification Phosphoserine. K69 bears the N6-acetyllysine mark. Y74 provides a ligand contact to substrate. Residue K172 is modified to N6-succinyllysine. An N6-acetyllysine modification is found at K179. N202 contacts substrate. Position 263 is an N6-(pyridoxal phosphate)lysine; alternate (K263). An N6-acetyllysine; alternate mark is found at K263 and K339. K263 and K339 each carry N6-succinyllysine; alternate. K351 is subject to N6-acetyllysine. K367 bears the N6-acetyllysine; alternate mark. K367 carries the N6-succinyllysine; alternate modification. R399 serves as a coordination point for substrate. Residue K422 is modified to N6-acetyllysine.

The protein belongs to the class-I pyridoxal-phosphate-dependent aminotransferase family. As to quaternary structure, homodimer. It depends on pyridoxal 5'-phosphate as a cofactor. In terms of tissue distribution, expressed mainly in kidney and to a lesser amount in liver and brain.

It localises to the mitochondrion. It catalyses the reaction L-kynurenine + 2-oxoglutarate = kynurenate + L-glutamate + H2O. The enzyme catalyses L-2-aminoadipate + 2-oxoglutarate = 2-oxoadipate + L-glutamate. It carries out the reaction glycine + 2-oxoglutarate = glyoxylate + L-glutamate. The catalysed reaction is L-kynurenine + glyoxylate = kynurenate + glycine + H2O. It catalyses the reaction 3-hydroxy-L-kynurenine + glyoxylate = xanthurenate + glycine + H2O. The enzyme catalyses 2-oxohexanoate + L-kynurenine = L-2-aminohexanoate + kynurenate + H2O. It carries out the reaction 3-phenylpyruvate + L-kynurenine = kynurenate + L-phenylalanine + H2O. The catalysed reaction is 4-methylsulfanyl-2-oxobutanoate + L-kynurenine = kynurenate + L-methionine + H2O. It catalyses the reaction 2-oxo-3-sulfanylpropanoate + L-kynurenine = kynurenate + L-cysteine + H2O. The enzyme catalyses indole-3-pyruvate + L-kynurenine = kynurenate + L-tryptophan + H2O. It carries out the reaction 2-oxopentanoate + L-kynurenine = L-2-aminopentanoate + kynurenate + H2O. The catalysed reaction is 4-methyl-2-oxopentanoate + L-kynurenine = kynurenate + L-leucine + H2O. It catalyses the reaction glyoxylate + L-methionine = 4-methylsulfanyl-2-oxobutanoate + glycine. The enzyme catalyses L-2-aminoadipate + glyoxylate = 2-oxoadipate + glycine. It carries out the reaction L-tyrosine + glyoxylate = 3-(4-hydroxyphenyl)pyruvate + glycine. The catalysed reaction is glyoxylate + L-phenylalanine = 3-phenylpyruvate + glycine. It catalyses the reaction L-tryptophan + glyoxylate = indole-3-pyruvate + glycine. The enzyme catalyses L-leucine + glyoxylate = 4-methyl-2-oxopentanoate + glycine. It carries out the reaction 2-oxobutanoate + L-kynurenine = (2S)-2-aminobutanoate + kynurenate + H2O. The catalysed reaction is 2-oxoadipate + L-kynurenine = L-2-aminoadipate + kynurenate + H2O. Its pathway is amino-acid degradation; L-lysine degradation via saccharopine pathway; glutaryl-CoA from L-lysine: step 4/6. Its function is as follows. Transaminase with broad substrate specificity. Has transaminase activity towards aminoadipate, kynurenine, methionine and glutamate. Shows activity also towards tryptophan, aspartate and hydroxykynurenine. Accepts a variety of oxo-acids as amino-group acceptors, with a preference for 2-oxoglutarate, 2-oxocaproic acid, phenylpyruvate and alpha-oxo-gamma-methiol butyric acid. Can also use glyoxylate as amino-group acceptor (in vitro). This Mus musculus (Mouse) protein is Kynurenine/alpha-aminoadipate aminotransferase, mitochondrial.